A 144-amino-acid polypeptide reads, in one-letter code: Large ribosomal subunit protein uL22 (144 aa).

The interval 1–38 is disordered; the sequence is MAETQTTKKGAKRVRQPVPARRSKPNRPAKAAPGPHAS. Over residues 9 to 27 the composition is skewed to basic residues; the sequence is KGAKRVRQPVPARRSKPNR.

The protein belongs to the universal ribosomal protein uL22 family. Part of the 50S ribosomal subunit.

Functionally, this protein binds specifically to 23S rRNA; its binding is stimulated by other ribosomal proteins, e.g. L4, L17, and L20. It is important during the early stages of 50S assembly. It makes multiple contacts with different domains of the 23S rRNA in the assembled 50S subunit and ribosome. Its function is as follows. The globular domain of the protein is located near the polypeptide exit tunnel on the outside of the subunit, while an extended beta-hairpin is found that lines the wall of the exit tunnel in the center of the 70S ribosome. The protein is Large ribosomal subunit protein uL22 of Anaeromyxobacter sp. (strain Fw109-5).